A 174-amino-acid polypeptide reads, in one-letter code: uncharacterized protein (174 aa).

Residues 7-27 (LIILAIFTLWVGGFGYYLYLI) form a helical membrane-spanning segment.

It is found in the membrane. This is an uncharacterized protein from Rickettsia prowazekii (strain Madrid E).